The chain runs to 524 residues: Probable inorganic phosphate transporter 1-2 (524 aa).

The Cytoplasmic portion of the chain corresponds to 1-24; that stretch reads MAEQQLGVLKALDVAKTQLYHFTA. Residues 25 to 45 form a helical membrane-spanning segment; that stretch reads IVIAGMGFFTDAYDLFCVSLV. At 46–70 the chain is on the extracellular side; sequence TKLLGRIYYFNPESAKPGSLPPHVA. Residues 71–91 traverse the membrane as a helical segment; that stretch reads AAVNGVALCGTLSGQLFFGWL. The Cytoplasmic portion of the chain corresponds to 92–99; sequence GDKLGRKK. A helical transmembrane segment spans residues 100–120; it reads VYGLTLIMMILCSVASGLSFG. At 121–131 the chain is on the extracellular side; that stretch reads NEAKGVMTTLC. Residues 132-152 traverse the membrane as a helical segment; the sequence is FFRFWLGFGIGGDYPLSATIM. Residues 153-161 lie on the Cytoplasmic side of the membrane; sequence SEYANKKTR. The chain crosses the membrane as a helical span at residues 162–182; that stretch reads GAFIAAVFAMQGVGILAGGFV. The Extracellular segment spans residues 183–211; the sequence is ALAVSSIFDKKFPAPTYAVNRALSTPPQV. A helical membrane pass occupies residues 212-232; sequence DYIWRIIVMFGALPAALTYYW. Residues 233-292 are Cytoplasmic-facing; the sequence is RMKMPETARYTALVAKNIKQATADMSKVLQTDIELEERVEDDVKDPRQNYGLFSKEFLRR. A helical transmembrane segment spans residues 293 to 313; it reads HGLHLLGTTSTWFLLDIAFYS. Over 314-348 the chain is Extracellular; it reads QNLFQKDIFSAIGWIPKAATMNATHEVFRIARAQT. The chain crosses the membrane as a helical span at residues 349 to 369; that stretch reads LIALCSTVPGYWFTVAFIDTI. Over 370-371 the chain is Cytoplasmic; sequence GR. A helical transmembrane segment spans residues 372–392; the sequence is FKIQLNGFFMMTVFMFAIAFP. Residues 393–402 lie on the Extracellular side of the membrane; that stretch reads YNHWIKPENR. The helical transmembrane segment at 403–423 threads the bilayer; sequence IGFVVMYSLTFFFANFGPNAT. Residues 424–441 lie on the Cytoplasmic side of the membrane; that stretch reads TFIVPAEIFPARLRSTCH. A helical membrane pass occupies residues 442–462; it reads GISAAAGKAGAIIGAFGFLYA. Topologically, residues 463-484 are extracellular; the sequence is AQNQDKAKVDAGYPPGIGVKNS. The chain crosses the membrane as a helical span at residues 485–505; sequence LIVLGVLNFIGMLFTFLVPEP. At 506–524 the chain is on the cytoplasmic side; sequence KGKSLEELSGEAEVSHDEK.

This sequence belongs to the major facilitator superfamily. Phosphate:H(+) symporter (TC 2.A.1.9) family. As to expression, root specific, especially in trichoblasts. In mature plants, localized in root cortical cells and young lateral roots.

It localises to the membrane. High-affinity transporter for external inorganic phosphate. The polypeptide is Probable inorganic phosphate transporter 1-2 (PHT1-2) (Arabidopsis thaliana (Mouse-ear cress)).